The sequence spans 397 residues: Subtilisin-like serine protease Pen c 1 (397 aa).

Positions 1–19 are cleaved as a signal peptide; the sequence is MGFLKVLATSLATLAVVDA. A propeptide spans 20–115 (removed in mature form); the sequence is GTLLTASNTD…IEPDMIVNAT (96 aa). In terms of domain architecture, Inhibitor I9 spans 35–113; it reads SYIVVMNDDV…KYIEPDMIVN (79 aa). The Peptidase S8 domain maps to 125 to 397; the sequence is SWGLARISSK…SKLLYNGINV (273 aa). Active-site charge relay system residues include Asp-157, His-188, and Ser-343.

The protein belongs to the peptidase S8 family.

It is found in the secreted. Its activity is regulated as follows. Inhibited by 0.1 mM diisopropyl fluorophosphate (DFP), phenylmethanesulfonyl fluoride (PMSF), chymostatin and elastatinal. Not inhibited by N-alpha-p-tosyl-L-lysine chloromethylketone (TLCK), N-tosyl-L-phenylalanyl chloromethyl ketone (TPCK) or N-carbobenzoxy-L-phenylalanine chloromethylketone (ZPCK). Serine protease. Hydrolyzes azocasein. Cleaves peptide bonds of the oxidized insulin B chain preferably at 15-Leu-|-Tyr-16, but also at 4-Gln-|-His-5 and 24-Phe-|-Phe-25, and to a lesser extent at 5-His-|-Leu-6 and 25-Phe-|-Tyr-26. Hydrolyzes amide bonds between amino acids and 7-amino-4-methylcoumarin (AMC) in vitro. The polypeptide is Subtilisin-like serine protease Pen c 1 (Penicillium citrinum).